The chain runs to 28 residues: Ranatuerin-2AVa (28 aa).

A disulfide bond links cysteine 23 and cysteine 28.

As to expression, expressed by the skin glands.

The protein resides in the secreted. Its function is as follows. Has antibacterial activity against the Gram positive bacterium L.lactis. The polypeptide is Ranatuerin-2AVa (Rana arvalis (Moor frog)).